A 75-amino-acid chain; its full sequence is MVRYFRRRKFCRFTAEGIKKIDYKDIMILKNYITENGKIVPSRITGTKAKYQRQLSRAIKIARFLGFIPYTDQHK.

This sequence belongs to the bacterial ribosomal protein bS18 family. In terms of assembly, part of the 30S ribosomal subunit. Forms a tight heterodimer with protein bS6.

In terms of biological role, binds as a heterodimer with protein bS6 to the central domain of the 16S rRNA, where it helps stabilize the platform of the 30S subunit. This chain is Small ribosomal subunit protein bS18, found in Buchnera aphidicola subsp. Cinara cedri (strain Cc).